The primary structure comprises 314 residues: MPVALCTMSHSPLMGRNDPAQTVIDDVDAAFENARTFIADFAPDLIVIFAPDHYNGVYYDLMPPFCIGAAAQSVGDYGTESGPLNVDRDAAYTVAREVLASGVDVAFSERMHVDHGFAQALQLLVGSITAVPTVPIFINSVAEPLGPVSRVRLLGEAVGRAAANLDKRVLFVGSGGLSHDPPVPQFATAPTEVKEKLIDGRNPTEAERNAREQRVIDAGRDFAAGVATIAPLNPEWDRNLLDVLTSGEIEQIDSWTNEWFVEQAGHSSHEVRTWIAAYAAMSAAGKYRVTSTFYREIPEWIAGFGISTAVAVDE.

H115 (proton donor) is an active-site residue. Catalysis depends on H179, which acts as the Proton acceptor.

The protein belongs to the LigB/MhpB extradiol dioxygenase family. As to quaternary structure, homotetramer. It depends on Fe(2+) as a cofactor.

The catalysed reaction is 3-(2,3-dihydroxyphenyl)propanoate + O2 = (2Z,4E)-2-hydroxy-6-oxonona-2,4-dienedioate + H(+). It carries out the reaction (2E)-3-(2,3-dihydroxyphenyl)prop-2-enoate + O2 = (2Z,4E,7E)-2-hydroxy-6-oxonona-2,4,7-trienedioate + H(+). Its pathway is aromatic compound metabolism; 3-phenylpropanoate degradation. In terms of biological role, catalyzes the non-heme iron(II)-dependent oxidative cleavage of 2,3-dihydroxyphenylpropionic acid and 2,3-dihydroxicinnamic acid into 2-hydroxy-6-ketononadienedioate and 2-hydroxy-6-ketononatrienedioate, respectively. This chain is 2,3-dihydroxyphenylpropionate/2,3-dihydroxicinnamic acid 1,2-dioxygenase, found in Rhodococcus jostii (strain RHA1).